The sequence spans 122 residues: Small ribosomal subunit protein uS13 (122 aa).

The interval 95 to 122 (GLPVRGQKTKTNARTRKGPKRTVANKKK) is disordered.

The protein belongs to the universal ribosomal protein uS13 family. As to quaternary structure, part of the 30S ribosomal subunit. Forms a loose heterodimer with protein S19. Forms two bridges to the 50S subunit in the 70S ribosome.

Located at the top of the head of the 30S subunit, it contacts several helices of the 16S rRNA. In the 70S ribosome it contacts the 23S rRNA (bridge B1a) and protein L5 of the 50S subunit (bridge B1b), connecting the 2 subunits; these bridges are implicated in subunit movement. Contacts the tRNAs in the A and P-sites. The chain is Small ribosomal subunit protein uS13 from Lachnoclostridium phytofermentans (strain ATCC 700394 / DSM 18823 / ISDg) (Clostridium phytofermentans).